We begin with the raw amino-acid sequence, 254 residues long: Floral homeotic protein APETALA 1 (254 aa).

The MADS-box domain maps to 3–57 (RGRVQLKRIENKINRQVTFSKRRAGLLKKAHEISVLCDAEVALVVFSHKGKLFEY). Positions 88–178 (NTNWSMEYNR…SKQIKEREKI (91 aa)) constitute a K-box domain.

Its subcellular location is the nucleus. Its function is as follows. Controls floral meristem identity. Is also required for normal development of sepals and petals. Is required for the transition of an influorescence meristem into a floral meristem. Interacts with LEAFY. The protein is Floral homeotic protein APETALA 1 (AP1) of Sinapis alba (White mustard).